A 343-amino-acid chain; its full sequence is MAATAAYLPLRAQAQVGLAPLRPSGSAAAGARLPGRTARRRLAARGGPEAAGIRAEAVPGGGGVARRAAMVPPYNVLITGSTKGIGYALAKEFLKAGDNVVICSRSAERVESAVTDLKKEFGEQHVWGIVCDVREGKDVKALVDFARDKMKYIDIWINNAGSNAYSYKPLVETSDEALMEVITTNTLGLMICCREAINMMRNQPRGGHIFNIDGAGSDGRPTPRFAAYGATKRSVVHLTKSLQAELQMNEVNNVMVHNLSPGMVTTDLLMSGATTKQAKFFINILAEPANVVADYLVPNIRAIPTNQSMKPTYIRFLTGLKAYSRIFSRIAFGARRNKYVAED.

A chloroplast-targeting transit peptide spans Met-1–Arg-54. Ile-78–Ile-102 contributes to the NAD(+) binding site. Tyr-228 serves as the catalytic Proton acceptor.

Belongs to the short-chain dehydrogenases/reductases (SDR) family. As to quaternary structure, interacts with NCY1 to form a complex that acts as a chlorophyll b reductase. As to expression, expressed in leaves and stems. Also detected in non-photosynthetic tissues such as roots.

It localises to the plastid. The protein localises to the chloroplast thylakoid membrane. The catalysed reaction is 7(1)-hydroxychlorophyllide a + NAD(+) = chlorophyllide b + NADH + H(+). It carries out the reaction 7(1)-hydroxychlorophyllide a + NADP(+) = chlorophyllide b + NADPH + H(+). Required for chlorophyll b degradation. This is Chlorophyll(ide) b reductase NOL, chloroplastic (NOL) from Oryza sativa subsp. japonica (Rice).